The chain runs to 239 residues: RNA polymerase sigma factor FliA (239 aa).

Residues 16-88 form a sigma-70 factor domain-2 region; it reads LWQRYVPLVR…MLDELRSRDW (73 aa). Residues 43 to 46 carry the Interaction with polymerase core subunit RpoC motif; sequence DLLQ. The interval 96 to 166 is sigma-70 factor domain-3; sequence NAREVAQAMG…IELVTEEHQQ (71 aa). The tract at residues 185-233 is sigma-70 factor domain-4; it reads AIESLPEREQLVLTLYYQEELNLKEIGAVLEVGESRVSQLHSQAIKRLR. Positions 207–226 form a DNA-binding region, H-T-H motif; it reads LKEIGAVLEVGESRVSQLHS.

This sequence belongs to the sigma-70 factor family. FliA subfamily.

The protein resides in the cytoplasm. In terms of biological role, sigma factors are initiation factors that promote the attachment of RNA polymerase to specific initiation sites and are then released. This sigma factor controls the expression of flagella-related genes. This Salmonella typhi protein is RNA polymerase sigma factor FliA.